Consider the following 449-residue polypeptide: MSARKYFGTDGIRGRVGQGVISADFVLRLGNALGRVLTQGRSKRPLVLIGKDTRISGYMFEAALEAGLVAAGADVQLIGPMPTPAIAFLTSTLRADAGVVISASHNPHYDNGIKFFSAEGEKLDDATEAAIEAALDEPFHTVESERLGKAIRTRDAIGRYIEFCKASVARGFTLHGLKMVLDCAHGATYHIAPMLFRELGAEVVVIGAAPDGLNINAGVGSTHIDNLAAKVRECGAHLGIAFDGDGDRVLMADDQGNPVDGDDLLYVLARSWQASGRLTGTVVGTLMTNYGLEQALAALHIPFQRAKVGDRYVHQALVEGGGTLGGETSGHLLCLDRASTGDGIVSALQVLEALGRDRQSLRDALTSLSKVPQKTVNVRLDGGAAKAIVEAANVQQALQQAQAAVRGRGRAFLRPSGTEPVVRVTVEADDAGLMQDTLDRLSGAVRDAA.

The active-site Phosphoserine intermediate is S104. Mg(2+) contacts are provided by S104, D243, D245, and D247. At S104 the chain carries Phosphoserine.

The protein belongs to the phosphohexose mutase family. Mg(2+) serves as cofactor. Post-translationally, activated by phosphorylation.

The enzyme catalyses alpha-D-glucosamine 1-phosphate = D-glucosamine 6-phosphate. Catalyzes the conversion of glucosamine-6-phosphate to glucosamine-1-phosphate. The polypeptide is Phosphoglucosamine mutase (Xanthomonas axonopodis pv. citri (strain 306)).